The sequence spans 89 residues: Small ribosomal subunit protein uS15 (89 aa).

The protein belongs to the universal ribosomal protein uS15 family. In terms of assembly, part of the 30S ribosomal subunit. Forms a bridge to the 50S subunit in the 70S ribosome, contacting the 23S rRNA.

In terms of biological role, one of the primary rRNA binding proteins, it binds directly to 16S rRNA where it helps nucleate assembly of the platform of the 30S subunit by binding and bridging several RNA helices of the 16S rRNA. Its function is as follows. Forms an intersubunit bridge (bridge B4) with the 23S rRNA of the 50S subunit in the ribosome. This chain is Small ribosomal subunit protein uS15, found in Mycobacterium marinum (strain ATCC BAA-535 / M).